The primary structure comprises 164 residues: Putative 4-hydroxy-4-methyl-2-oxoglutarate aldolase (164 aa).

Substrate-binding positions include Gly-74–Leu-77 and Arg-96. Asp-97 serves as a coordination point for a divalent metal cation.

It belongs to the class II aldolase/RraA-like family. As to quaternary structure, homotrimer. A divalent metal cation serves as cofactor.

The enzyme catalyses 4-hydroxy-4-methyl-2-oxoglutarate = 2 pyruvate. It catalyses the reaction oxaloacetate + H(+) = pyruvate + CO2. Functionally, catalyzes the aldol cleavage of 4-hydroxy-4-methyl-2-oxoglutarate (HMG) into 2 molecules of pyruvate. Also contains a secondary oxaloacetate (OAA) decarboxylase activity due to the common pyruvate enolate transition state formed following C-C bond cleavage in the retro-aldol and decarboxylation reactions. This is Putative 4-hydroxy-4-methyl-2-oxoglutarate aldolase from Thermus thermophilus (strain ATCC BAA-163 / DSM 7039 / HB27).